We begin with the raw amino-acid sequence, 108 residues long: RNA silencing suppressor (108 aa).

Positions 47–50 (RRRR) are basic. Residues 57–78 (CHRCYRLWPPTVFTTRCDNKHC) form a C4-type zinc finger.

The protein belongs to the carlaviruses nucleic acid-binding protein family.

Its function is as follows. Suppressor of viral-induced RNA silencing. Increases the accumulation of viral RNA and enhances viral cell-to-cell movement by inhibiting RNA silencing. The protein is RNA silencing suppressor of Solanum tuberosum (Potato).